Here is a 757-residue protein sequence, read N- to C-terminus: MAEVGRTGISYPGALLPQGFWAAVEVWLERPQVANKRLCGARLEARWSAALPCAEARGPGTSAGSEQKERGPGPGQGSPGGGPGPRSLSGPEQGTACCELEEAQGQCQQEEAQREAASVPLRDSGHPGHAEGREGDFPAADLDSLWEDFSQSLARGNSELLAFLTSSGAGSQPEAQRELDVVLRTVIPKTSPHCPLTTPRREIVVQDVLNGTITFLPLEEDDEGNLKVKMSNVYQIQLSHSKEEWFISVLIFCPERWHSDGIVYPKPTWLGEELLAKLAKWSVENKKSDFKSTLSLISIMKYSKAYQELKEKYKEMVKVWPEVTDPEKFVYEDVAIAAYLLILWEEERAERRLTARQSFVDLGCGNGLLVHILSSEGHPGRGIDVRRRKIWDMYGPQTQLEEDAITPNDKTLFPDVDWLIGNHSDELTPWIPVIAARSSYNCRFFVLPCCFFDFIGRYSRRQSKKTQYREYLDFIKEVGFTCGFHVDEDCLRIPSTKRVCLVGKSRTYPSSREASVDEKRTQYIKSRRGCPVSPPGWELSPSPRWVAAGSAGHCDGQQALDARVGCVTRAWAAEHGAGPQAEGPWLPGFHPREKAERVRNCAALPRDFIDQVVLQVANLLLGGKQLNTRSSRNGSLKTWNGGESLSLAEVANELDTETLRRLKRECGGLQTLLRNSHQVFQVVNGRVHIRDWREETLWKTKQPEAKQRLLSEACKTRLCWFFMHHPDGCALSTDCCPFAHGPAELRPPRTTPRKKIS.

Disordered regions lie at residues 55–93 (EARGPGTSAGSEQKERGPGPGQGSPGGGPGPRSLSGPEQ) and 108–138 (QQEEAQREAASVPLRDSGHPGHAEGREGDFP). The span at 72–84 (PGPGQGSPGGGPG) shows a compositional bias: gly residues. Ser78 bears the Phosphoserine mark. Over residues 123–136 (DSGHPGHAEGREGD) the composition is skewed to basic and acidic residues. A Phosphoserine modification is found at Ser533. Residues 713–743 (ACKTRLCWFFMHHPDGCALSTDCCPFAHGPA) form a C3H1-type zinc finger.

This sequence belongs to the TRM44 family.

It is found in the cytoplasm. The catalysed reaction is uridine(44) in tRNA(Ser) + S-adenosyl-L-methionine = 2'-O-methyluridine(44) in tRNA(Ser) + S-adenosyl-L-homocysteine + H(+). Functionally, probable adenosyl-L-methionine (AdoMet)-dependent tRNA (uracil-O(2)-)-methyltransferase. In Homo sapiens (Human), this protein is Probable tRNA (uracil-O(2)-)-methyltransferase (TRMT44).